Reading from the N-terminus, the 245-residue chain is tRNA pseudouridine synthase A (245 aa).

The active-site Nucleophile is the Asp-52. Tyr-111 contacts substrate.

This sequence belongs to the tRNA pseudouridine synthase TruA family. Homodimer.

The enzyme catalyses uridine(38/39/40) in tRNA = pseudouridine(38/39/40) in tRNA. In terms of biological role, formation of pseudouridine at positions 38, 39 and 40 in the anticodon stem and loop of transfer RNAs. This Ehrlichia chaffeensis (strain ATCC CRL-10679 / Arkansas) protein is tRNA pseudouridine synthase A.